The primary structure comprises 341 residues: Uroporphyrinogen decarboxylase (341 aa).

Substrate contacts are provided by residues 26 to 30 (RQAGR), Asp75, Tyr150, Ser205, and His318.

It belongs to the uroporphyrinogen decarboxylase family. As to quaternary structure, homodimer.

It localises to the cytoplasm. The enzyme catalyses uroporphyrinogen III + 4 H(+) = coproporphyrinogen III + 4 CO2. It participates in porphyrin-containing compound metabolism; protoporphyrin-IX biosynthesis; coproporphyrinogen-III from 5-aminolevulinate: step 4/4. Catalyzes the decarboxylation of four acetate groups of uroporphyrinogen-III to yield coproporphyrinogen-III. This chain is Uroporphyrinogen decarboxylase, found in Thermus thermophilus (strain ATCC BAA-163 / DSM 7039 / HB27).